The sequence spans 418 residues: MASSGLAVAATASSAWLCCPNHHIHTSSSRSRKHLLLHGLYGSAPARTRGRRPPVWTAAAATAAAPADTAASARREQVEIARSLNAWVEENMLPLLTPVDSAWQPHDFLPCSAAGGGEALAAFTEGVAELRAGAAGVPDEVLVCLVGNMVTEEALPTYQSMGNRAEGLADGTGVSPLPWARWLRGWTAEENRHGDLLNRYLYLSGRVDMRQVEATVHRLLRNGMEMLAPASPYHGLIYGAFQERATFISHGHTARLAGQHGDRALAKICGVIAADERRHEAGYTMASGRLFELDPDGMARALADVMRGKVTMPGQLMSDGRDGDGEHSLFARFSAVAERAGVYTARDYGDLVEHFVRRWRVAELAAGLSGEGRRAQEYLCGLAPKIRRMEELAHRRAARIEPAMARFSWIFDRPVMLG.

The N-terminal 70 residues, 1–70, are a transit peptide targeting the chloroplast; sequence MASSGLAVAA…ATAAAPADTA (70 aa). Fe cation is bound by residues E152, E190, H193, E243, E276, and H279.

This sequence belongs to the fatty acid desaturase type 2 family. Homodimer. Requires Fe(2+) as cofactor.

The protein resides in the plastid. It is found in the chloroplast. It participates in lipid metabolism; fatty acid metabolism. In terms of biological role, introduces a cis double bond in the acyl chain of an acyl-[acyl-carrier protein]. The sequence is that of Acyl-[acyl-carrier-protein] desaturase 4, chloroplastic from Oryza sativa subsp. japonica (Rice).